Consider the following 209-residue polypeptide: Kynurenine formamidase (209 aa).

W20 is a substrate binding site. Zn(2+) contacts are provided by H50, H54, and D56. The Proton donor/acceptor role is filled by H60. 2 residues coordinate Zn(2+): H161 and E173.

This sequence belongs to the Cyclase 1 superfamily. KynB family. As to quaternary structure, homodimer. Zn(2+) is required as a cofactor.

The catalysed reaction is N-formyl-L-kynurenine + H2O = L-kynurenine + formate + H(+). It functions in the pathway amino-acid degradation; L-tryptophan degradation via kynurenine pathway; L-kynurenine from L-tryptophan: step 2/2. In terms of biological role, catalyzes the hydrolysis of N-formyl-L-kynurenine to L-kynurenine, the second step in the kynurenine pathway of tryptophan degradation. The chain is Kynurenine formamidase from Bacillus mycoides (strain KBAB4) (Bacillus weihenstephanensis).